Consider the following 664-residue polypeptide: Macoilin-1 (664 aa).

4 helical membrane-spanning segments follow: residues 28–48 (TFLYLKFLVVWALVLLADFVL), 75–95 (AFSVFFVCVAFTSDIICLLFI), 120–140 (VCLPTVSLWILFVYIEAAIRF), and 154–174 (FAAHCIGYPVVTLGFGFKSYV). A disordered region spans residues 206–225 (QMLQRQERETEEATSKGMSE). Basic and acidic residues predominate over residues 210-219 (RQERETEEAT). N-linked (GlcNAc...) asparagine glycans are attached at residues asparagine 234, asparagine 336, asparagine 339, asparagine 348, and asparagine 655. Disordered stretches follow at residues 315–364 (VGAG…LAPH) and 644–664 (FMDTSPSSLDPNASVYQPLKK). Residues 334-348 (SHNSTNGSVPSSSSN) are compositionally biased toward low complexity. Residues 644-658 (FMDTSPSSLDPNASV) are compositionally biased toward polar residues.

The protein belongs to the macoilin family.

It is found in the nucleus membrane. It localises to the rough endoplasmic reticulum membrane. May play a role in the regulation of neuronal activity. This Danio rerio (Zebrafish) protein is Macoilin-1.